A 601-amino-acid chain; its full sequence is Glutamine--fructose-6-phosphate aminotransferase [isomerizing] (601 aa).

C2 acts as the Nucleophile; for GATase activity in catalysis. Residues 2 to 218 enclose the Glutamine amidotransferase type-2 domain; it reads CGIVGYIGYD…DHEIVIVKKD (217 aa). 2 consecutive SIS domains span residues 284-423 and 453-591; these read IIND…EHGR and IATD…VDKP. K596 acts as the For Fru-6P isomerization activity in catalysis.

In terms of assembly, homodimer.

It is found in the cytoplasm. It carries out the reaction D-fructose 6-phosphate + L-glutamine = D-glucosamine 6-phosphate + L-glutamate. Catalyzes the first step in hexosamine metabolism, converting fructose-6P into glucosamine-6P using glutamine as a nitrogen source. This is Glutamine--fructose-6-phosphate aminotransferase [isomerizing] from Staphylococcus aureus (strain MRSA252).